Consider the following 247-residue polypeptide: uncharacterized protein (247 aa).

The next 3 helical transmembrane spans lie at 108–128 (WYIN…FLII), 136–156 (IFSV…NIIC), and 194–214 (GAKL…LFFI).

Its subcellular location is the membrane. This is an uncharacterized protein from Caenorhabditis elegans.